Reading from the N-terminus, the 615-residue chain is Chromosomal replication initiator protein DnaA (615 aa).

The domain I, interacts with DnaA modulators stretch occupies residues 1-88 (MSEGQINLAM…RVAVTVDPSA (88 aa)). A disordered region spans residues 85–272 (DPSAVPPSAP…PTSGGPDQLN (188 aa)). Residues 88–269 (AVPPSAPTEE…STNPTSGGPD (182 aa)) are domain II. 2 stretches are compositionally biased toward low complexity: residues 94–112 (PTEE…PAPD) and 173–190 (PSSA…VAES). Positions 270–486 (QLNPKYTFDT…GALIRVTAFA (217 aa)) are domain III, AAA+ region. 4 residues coordinate ATP: Gly-314, Gly-316, Lys-317, and Thr-318. Residues 487-615 (SLNRQSVDLH…QQAHHNHHHL (129 aa)) form a domain IV, binds dsDNA region.

The protein belongs to the DnaA family. Oligomerizes as a right-handed, spiral filament on DNA at oriC.

Its subcellular location is the cytoplasm. Plays an essential role in the initiation and regulation of chromosomal replication. ATP-DnaA binds to the origin of replication (oriC) to initiate formation of the DNA replication initiation complex once per cell cycle. Binds the DnaA box (a 9 base pair repeat at the origin) and separates the double-stranded (ds)DNA. Forms a right-handed helical filament on oriC DNA; dsDNA binds to the exterior of the filament while single-stranded (ss)DNA is stabiized in the filament's interior. The ATP-DnaA-oriC complex binds and stabilizes one strand of the AT-rich DNA unwinding element (DUE), permitting loading of DNA polymerase. After initiation quickly degrades to an ADP-DnaA complex that is not apt for DNA replication. Binds acidic phospholipids. The protein is Chromosomal replication initiator protein DnaA of Thermobifida fusca (strain YX).